Consider the following 927-residue polypeptide: Isoleucine--tRNA ligase (927 aa).

The short motif at 60 to 70 (PYANGNIHLGH) is the 'HIGH' region element. An L-isoleucyl-5'-AMP-binding site is contributed by Glu557. Positions 598 to 602 (KMSKS) match the 'KMSKS' region motif. Lys601 contributes to the ATP binding site. Positions 895, 898, 915, and 918 each coordinate Zn(2+).

This sequence belongs to the class-I aminoacyl-tRNA synthetase family. IleS type 1 subfamily. Monomer. It depends on Zn(2+) as a cofactor.

It is found in the cytoplasm. It catalyses the reaction tRNA(Ile) + L-isoleucine + ATP = L-isoleucyl-tRNA(Ile) + AMP + diphosphate. Its function is as follows. Catalyzes the attachment of isoleucine to tRNA(Ile). As IleRS can inadvertently accommodate and process structurally similar amino acids such as valine, to avoid such errors it has two additional distinct tRNA(Ile)-dependent editing activities. One activity is designated as 'pretransfer' editing and involves the hydrolysis of activated Val-AMP. The other activity is designated 'posttransfer' editing and involves deacylation of mischarged Val-tRNA(Ile). This chain is Isoleucine--tRNA ligase, found in Syntrophomonas wolfei subsp. wolfei (strain DSM 2245B / Goettingen).